A 210-amino-acid polypeptide reads, in one-letter code: Chloramphenicol acetyltransferase (210 aa).

The active site involves histidine 79.

Belongs to the transferase hexapeptide repeat family.

It catalyses the reaction chloramphenicol + acetyl-CoA = chloramphenicol 3-acetate + CoA. This enzyme is an effector of chloramphenicol resistance in bacteria. The sequence is that of Chloramphenicol acetyltransferase (cat) from Morganella morganii (Proteus morganii).